A 641-amino-acid polypeptide reads, in one-letter code: Frizzled-1 (641 aa).

The first 68 residues, 1–68 (MAEEAVPSES…WLLEAPLLLG (68 aa)), serve as a signal peptide directing secretion. Over 69 to 316 (VRAQPAGQVS…PEELRFSRTW (248 aa)) the chain is Extracellular. Positions 74 to 99 (AGQVSGPGQQRPPPPQPQQGGQQYNG) are disordered. The 119-residue stretch at 106-224 (PDHGYCQPIS…HGAGELCVGQ (119 aa)) folds into the FZ domain. 5 disulfide bridges follow: cysteine 111–cysteine 172, cysteine 119–cysteine 165, cysteine 156–cysteine 192, cysteine 182–cysteine 221, and cysteine 186–cysteine 209. Asparagine 125 carries an N-linked (GlcNAc...) asparagine glycan. N-linked (GlcNAc...) asparagine glycosylation is present at asparagine 225. The helical transmembrane segment at 317-337 (IGIWSVLCCASTLFTVLTYLV) threads the bilayer. The Cytoplasmic portion of the chain corresponds to 338–348 (DMRRFSYPERP). A helical membrane pass occupies residues 349–369 (IIFLSGCYTAVAVAYIAGFLL). Residues 370–396 (EDRVVCNDKFAEDGARTVAQGTKKEGC) lie on the Extracellular side of the membrane. The helical transmembrane segment at 397–417 (TILFMMLYFFSMASSIWWVIL) threads the bilayer. At 418-439 (SLTWFLAAGMKWGHEAIEANSQ) the chain is on the cytoplasmic side. Residues 440–460 (YFHLAAWAVPAIKTITILALG) form a helical membrane-spanning segment. Residues 461-483 (QVDGDVLSGVCFVGLNNVDALRG) are Extracellular-facing. The chain crosses the membrane as a helical span at residues 484–504 (FVLAPLFVYLFIGTSFLLAGF). The Cytoplasmic portion of the chain corresponds to 505–530 (VSLFRIRTIMKHDGTKTEKLEKLMVR). The helical transmembrane segment at 531-551 (IGVFSVLYTVPATIVIACYFY) threads the bilayer. Residues 552–595 (EQAFRDQWERSWVAQSCKSYAIPCPHLQGGGGVPPHPPMSPDFT) are Extracellular-facing. Residues 596–616 (VFMIKYLMTLIVGITSGFWIW) form a helical membrane-spanning segment. Residues 617–641 (SGKTLNSWRKFYTRLTNSKQGETTV) are Cytoplasmic-facing. Residues 619 to 624 (KTLNSW) carry the Lys-Thr-X-X-X-Trp motif, mediates interaction with the PDZ domain of Dvl family members motif. The PDZ-binding signature appears at 639-641 (TTV).

Belongs to the G-protein coupled receptor Fz/Smo family. Interacts with MYOC. Interacts with WNT7B. Post-translationally, ubiquitinated by ZNRF3, leading to its degradation by the proteasome. As to expression, widely expressed. Most abundant in kidney, liver, uterus, ovary and heart. Lower levels seen in brain and intestine. Extremely low in calvaria, mammary glands and testis.

It is found in the cell membrane. Its function is as follows. Receptor for Wnt proteins. Activated by WNT3A, WNT3, WNT1 and to a lesser extent WNT2, but apparently not by WNT4, WNT5A, WNT5B, WNT6 or WNT7A. Contradictory results have been reported for activation by WNT7B. Functions in the canonical Wnt/beta-catenin signaling pathway. The canonical Wnt/beta-catenin signaling pathway leads to the activation of disheveled proteins, inhibition of GSK-3 kinase, nuclear accumulation of beta-catenin and activation of Wnt target genes. A second signaling pathway involving PKC and calcium fluxes has been seen for some family members, but it is not yet clear if it represents a distinct pathway or if it can be integrated in the canonical pathway, as PKC seems to be required for Wnt-mediated inactivation of GSK-3 kinase. Both pathways seem to involve interactions with G-proteins. May be involved in transduction and intercellular transmission of polarity information during tissue morphogenesis and/or in differentiated tissues. In Rattus norvegicus (Rat), this protein is Frizzled-1 (Fzd1).